Consider the following 557-residue polypeptide: Probable protein kinase UbiB (557 aa).

The Protein kinase domain maps to 121-509 (SFDTVPLASA…RKLQTRVVTA (389 aa)). Residues 127-135 (LASASIAQV) and K154 contribute to the ATP site. Residue D289 is the Proton acceptor of the active site. Transmembrane regions (helical) follow at residues 506–526 (VVTAITGSGLLVVAAVLYGLH) and 535–555 (VPVWSWISGGAGSAALLVAWL).

It belongs to the ABC1 family. UbiB subfamily.

The protein resides in the cell inner membrane. The protein operates within cofactor biosynthesis; ubiquinone biosynthesis [regulation]. Is probably a protein kinase regulator of UbiI activity which is involved in aerobic coenzyme Q (ubiquinone) biosynthesis. The protein is Probable protein kinase UbiB of Xanthomonas euvesicatoria pv. vesicatoria (strain 85-10) (Xanthomonas campestris pv. vesicatoria).